The chain runs to 838 residues: Protein kintoun (838 aa).

Disordered regions lie at residues 106–125, 212–238, 370–411, 557–696, and 776–838; these read RPKN…LNWS, NPTA…GKPE, LRHF…TSSP, NAPL…DSCS, and QQRR…EMDD. The segment covering 114-125 has biased composition (polar residues); the sequence is DPSSGSRGLNWS. Residues 370–380 are compositionally biased toward basic and acidic residues; sequence LRHFSREDSGV. A Phosphoserine modification is found at S378. The segment covering 389–398 has biased composition (acidic residues); the sequence is PVEEDPDGEL. The segment covering 557 to 572 has biased composition (basic and acidic residues); that stretch reads NAPLDVEFERNQEGHA. Acidic residues predominate over residues 583 to 592; sequence EEEEEEEDKE. The span at 601–611 shows a compositional bias: low complexity; the sequence is DQQQQQQVQNK. Composition is skewed to basic residues over residues 612–623 and 673–683; these read KSGKKQRKRNKK and RSHRGILKRFS. Phosphoserine is present on S781. Residues 789 to 802 show a composition bias toward basic and acidic residues; sequence EETRGSALKQKENP.

It belongs to the PIH1 family. Kintoun subfamily. Interacts with Pp1alpha-96A, Pp1-87B, Pp1-13C and flw.

The protein resides in the cytoplasm. Functionally, required for cytoplasmic pre-assembly of axonemal dyneins, thereby playing a central role in motility in cilia and flagella. Involved in pre-assembly of dynein arm complexes in the cytoplasm before intraflagellar transport loads them for the ciliary compartment. This Drosophila sechellia (Fruit fly) protein is Protein kintoun.